A 155-amino-acid polypeptide reads, in one-letter code: uncharacterized protein (155 aa).

The 62-residue stretch at 4–65 (IDEIDEIIVR…VVDTSFFGEF (62 aa)) folds into the HTH asnC-type domain. Residues 23–42 (LTELGKKVGLTASAVKNRIE) constitute a DNA-binding region (H-T-H motif).

This is an uncharacterized protein from Pyrococcus abyssi (strain GE5 / Orsay).